The following is a 685-amino-acid chain: Probable inactive leucine-rich repeat receptor-like protein kinase At1g66830 (685 aa).

Residues 1-21 form the signal peptide; that stretch reads MSQLFLILCFILTHFFAIATS. The Extracellular segment spans residues 22–305; that stretch reads LNDQGLALLS…RRANHHSRLC (284 aa). Residues Asn-38 and Asn-48 are each glycosylated (N-linked (GlcNAc...) asparagine). LRR repeat units follow at residues 65–89, 90–113, 115–136, 137–161, 162–185, 186–210, 212–234, and 235–260; these read DMRV…IGSL, LSLR…LFGL, GLQS…EIGS, LKSL…LIPC, KKLK…LGSN, LVHL…VGSL, NLKG…SLGN, and LPEL…VLLN. Asn-151 carries N-linked (GlcNAc...) asparagine glycosylation. N-linked (GlcNAc...) asparagine glycosylation occurs at Asn-193. An N-linked (GlcNAc...) asparagine glycan is attached at Asn-247. The chain crosses the membrane as a helical span at residues 306 to 326; that stretch reads IILTATGGTVAGIIFLASLFI. Topologically, residues 327-685 are cytoplasmic; sequence YYLRKASARA…ESFEKLVTSI (359 aa). Positions 397-682 constitute a Protein kinase domain; it reads KASAFLLGKS…SVLESFEKLV (286 aa). 3 positions are modified to phosphoserine: Ser-399, Ser-480, and Ser-590.

Belongs to the protein kinase superfamily. Ser/Thr protein kinase family.

It is found in the cell membrane. The chain is Probable inactive leucine-rich repeat receptor-like protein kinase At1g66830 from Arabidopsis thaliana (Mouse-ear cress).